A 338-amino-acid polypeptide reads, in one-letter code: Anthocyanidin reductase ((2S)-flavan-3-ol-forming) (338 aa).

NADP(+) contacts are provided by residues 18 to 21 (TGFV), Lys48, 87 to 90 (VATP), and Tyr168.

This sequence belongs to the NAD(P)-dependent epimerase/dehydratase family. Dihydroflavonol-4-reductase subfamily. As to expression, expressed in leaves and grape berries.

The catalysed reaction is a (2S,3R)-flavan-3-ol + 2 NADP(+) = an anthocyanidin with a 3-hydroxy group + 2 NADPH + 2 H(+). The enzyme catalyses a (2S,3S)-flavan-3-ol + 2 NADP(+) = an anthocyanidin with a 3-hydroxy group + 2 NADPH + 2 H(+). It functions in the pathway secondary metabolite biosynthesis; flavonoid biosynthesis. In terms of biological role, produces the terminal flavan-3-ol monomers required for the formation of proanthocyanidins or condensed tannins in leaves and flowers, as well as in the skin and seeds of developing berries. Behaves as a reductase and as a C-3 epimerase. Catalyzes the double reduction of anthocyanidins, producing a mixture of (2S,3S)- and (2S,3R)-flavan-3-ols. The enzyme catalyzes sequential hydride transfers to C-2 and C-4, respectively and epimerization at C-3 is achieved by tautomerization that occurs between the two hydride transfers. Converts cyanidin, pelargonidin and delphinidin into catechin and epicatechin, afzelechin and epiafzelechin, and gallocatechin and epigallocatechin respectively. This Vitis vinifera (Grape) protein is Anthocyanidin reductase ((2S)-flavan-3-ol-forming).